We begin with the raw amino-acid sequence, 76 residues long: Dermaseptin-B4 (76 aa).

The signal sequence occupies residues 1 to 22 (MAFLKKSLFLVLFLGLVSLSIC). A propeptide spanning residues 23–43 (EEEKRENKDEIEQEDDEQSEE) is cleaved from the precursor. Glutamine amide is present on Gln-73. The propeptide occupies 75–76 (EQ).

The protein belongs to the frog skin active peptide (FSAP) family. Dermaseptin subfamily. Expressed by the skin glands.

Its subcellular location is the secreted. Functionally, potent antimicrobial peptide with potent activity against Gram-positive and Gram-negative bacteria. Probably acts by disturbing membrane functions with its amphipathic structure. Has an activity of stimulation of insulin release, which may protect the species from being eaten by predators by causing fatal hypoglycemia. Has hemolytic activity. The chain is Dermaseptin-B4 from Phyllomedusa bicolor (Two-colored leaf frog).